Reading from the N-terminus, the 204-residue chain is dTTP/UTP pyrophosphatase (204 aa).

D68 acts as the Proton acceptor in catalysis.

The protein belongs to the Maf family. YhdE subfamily. A divalent metal cation is required as a cofactor.

It is found in the cytoplasm. It carries out the reaction dTTP + H2O = dTMP + diphosphate + H(+). The catalysed reaction is UTP + H2O = UMP + diphosphate + H(+). Its function is as follows. Nucleoside triphosphate pyrophosphatase that hydrolyzes dTTP and UTP. May have a dual role in cell division arrest and in preventing the incorporation of modified nucleotides into cellular nucleic acids. The chain is dTTP/UTP pyrophosphatase from Thermotoga petrophila (strain ATCC BAA-488 / DSM 13995 / JCM 10881 / RKU-1).